We begin with the raw amino-acid sequence, 277 residues long: Shikimate dehydrogenase (NADP(+)) (277 aa).

Shikimate contacts are provided by residues 15–17 and threonine 62; that span reads SLS. The active-site Proton acceptor is the lysine 66. 2 residues coordinate shikimate: asparagine 87 and aspartate 102. NADP(+) is bound by residues 127 to 131, 151 to 156, and isoleucine 219; these read GAGGA and NRTVDK. Tyrosine 221 is a shikimate binding site. NADP(+) is bound at residue glycine 242.

The protein belongs to the shikimate dehydrogenase family. As to quaternary structure, homodimer.

It carries out the reaction shikimate + NADP(+) = 3-dehydroshikimate + NADPH + H(+). It functions in the pathway metabolic intermediate biosynthesis; chorismate biosynthesis; chorismate from D-erythrose 4-phosphate and phosphoenolpyruvate: step 4/7. Its function is as follows. Involved in the biosynthesis of the chorismate, which leads to the biosynthesis of aromatic amino acids. Catalyzes the reversible NADPH linked reduction of 3-dehydroshikimate (DHSA) to yield shikimate (SA). The polypeptide is Shikimate dehydrogenase (NADP(+)) (Bacillus cereus (strain G9842)).